We begin with the raw amino-acid sequence, 358 residues long: Histamine H2 receptor (358 aa).

At 1–22 (MEPNGTVHSCCLDSMALKVTIS) the chain is on the extracellular side. N4 carries an N-linked (GlcNAc...) asparagine glycan. Residues 23–44 (VVLTTLILITIAGNVVVCLAVS) form a helical membrane-spanning segment. Residues 45-57 (LNRRLRSLTNCFI) are Cytoplasmic-facing. The helical transmembrane segment at 58–81 (VSLAATDLLLGLLVLPFSAIYQLS) threads the bilayer. Topologically, residues 82–92 (FTWSFGHVFCN) are extracellular. C91 and C173 are joined by a disulfide. Residues 93–114 (IYTSLDVMLCTASILNLFMISL) traverse the membrane as a helical segment. At 115–134 (DRYCAVTDPLRYPVLVTPVR) the chain is on the cytoplasmic side. The chain crosses the membrane as a helical span at residues 135 to 159 (VAISLVFIWVISITLSFLSIHLGWN). At 160–179 (SRNGTRGGNDTFKCKVQVNE) the chain is on the extracellular side. Residues 180 to 203 (VYGLVDGLVTFYLPLLIMCVTYYR) traverse the membrane as a helical segment. Topologically, residues 204 to 233 (IFKIAREQAKRINHISSWKAATIREHKATV) are cytoplasmic. The chain crosses the membrane as a helical span at residues 234 to 257 (TLAAVMGAFIICWFPYFTAFVYRG). Topologically, residues 258–266 (LRGDDAINE) are extracellular. The chain crosses the membrane as a helical span at residues 267-288 (AVEGIVLWLGYANSALNPILYA). Over 289–358 (ALNRDFRTAY…LTHPQGNPIR (70 aa)) the chain is Cytoplasmic. Residue C304 is the site of S-palmitoyl cysteine attachment.

This sequence belongs to the G-protein coupled receptor 1 family.

The protein resides in the cell membrane. In terms of biological role, the H2 subclass of histamine receptors mediates gastric acid secretion. The activity of this receptor is mediated by G proteins which activate adenylyl cyclase. The polypeptide is Histamine H2 receptor (Hrh2) (Rattus norvegicus (Rat)).